Consider the following 338-residue polypeptide: Pseudouridylate synthase TRUB1 (338 aa).

Ala2 carries the N-acetylalanine modification. Asp109 functions as the Nucleophile in the catalytic mechanism.

It belongs to the pseudouridine synthase TruB family.

It is found in the nucleus. It localises to the cytoplasm. The protein localises to the cytosol. It carries out the reaction a uridine in mRNA = a pseudouridine in mRNA. The enzyme catalyses a uridine in tRNA = a pseudouridine in tRNA. It catalyses the reaction uridine(55) in tRNA = pseudouridine(55) in tRNA. Its function is as follows. Pseudouridine synthase that catalyzes pseudouridylation of mRNAs and tRNAs. Mediates pseudouridylation of mRNAs with the consensus sequence 5'-GUUCNANNC-3', harboring a stem-loop structure. Constitutes the major pseudouridine synthase acting on mRNAs. Also catalyzes pseudouridylation of some tRNAs, including synthesis of pseudouridine(55) from uracil-55, in the psi GC loop of a subset of tRNAs. Promotes the processing of pri-let-7 microRNAs (pri-miRNAs) independently of its RNA pseudouridylate synthase activity. Acts by binding to the stem-loop structure on pri-let-7, preventing LIN28-binding (LIN28A and/or LIN28B), thereby enhancing the interaction between pri-let-7 and the microprocessor DGCR8, which mediates miRNA maturation. In Mus musculus (Mouse), this protein is Pseudouridylate synthase TRUB1.